The primary structure comprises 406 residues: Diaminopimelate decarboxylase (406 aa).

Lys-52 bears the N6-(pyridoxal phosphate)lysine mark. Pyridoxal 5'-phosphate-binding positions include Gly-231 and 265 to 268 (EPGR). 3 residues coordinate substrate: Arg-268, Arg-304, and Tyr-308. Cys-334 functions as the Proton donor in the catalytic mechanism. Substrate is bound by residues Glu-335 and Tyr-362. Tyr-362 is a binding site for pyridoxal 5'-phosphate.

This sequence belongs to the Orn/Lys/Arg decarboxylase class-II family. LysA subfamily. As to quaternary structure, homodimer. The cofactor is pyridoxal 5'-phosphate.

It catalyses the reaction meso-2,6-diaminopimelate + H(+) = L-lysine + CO2. It functions in the pathway amino-acid biosynthesis; L-lysine biosynthesis via DAP pathway; L-lysine from DL-2,6-diaminopimelate: step 1/1. Functionally, specifically catalyzes the decarboxylation of meso-diaminopimelate (meso-DAP) to L-lysine. The polypeptide is Diaminopimelate decarboxylase (Neisseria meningitidis serogroup A / serotype 4A (strain DSM 15465 / Z2491)).